We begin with the raw amino-acid sequence, 376 residues long: Pre-mRNA-splicing factor cwf25 (376 aa).

Residues Lys25 to Ala60 are a coiled coil. 2 disordered regions span residues Leu153–Asn211 and Arg258–Arg289. Over residues Met154–Ser167 the composition is skewed to basic and acidic residues. A compositionally biased stretch (basic residues) spans Lys168 to Arg178. A compositionally biased stretch (basic and acidic residues) spans Ser179–Glu199. A phosphoserine mark is found at Ser266 and Ser268. Residues Ile286–Arg334 adopt a coiled-coil conformation.

The protein belongs to the CWC25 family. Belongs to the 40S cdc5-associated complex (or cwf complex), a spliceosome sub-complex reminiscent of a late-stage spliceosome composed of the U2, U5 and U6 snRNAs and at least brr2, cdc5, cwf2/prp3, cwf3/syf1, cwf4/syf3, cwf5/ecm2, spp42/cwf6, cwf7/spf27, cwf8, cwf9, cwf10, cwf11, cwf12, prp45/cwf13, cwf14, cwf15, cwf16, cwf17, cwf18, cwf19, cwf20, cwf21, cwf22, cwf23, cwf24, cwf25, cwf26, cyp7/cwf27, cwf28, cwf29/ist3, lea1, msl1, prp5/cwf1, prp10, prp12/sap130, prp17, prp22, sap61, sap62, sap114, sap145, slu7, smb1, smd1, smd3, smf1, smg1 and syf2.

It localises to the nucleus. Functionally, involved in mRNA splicing. The protein is Pre-mRNA-splicing factor cwf25 (cwf25) of Schizosaccharomyces pombe (strain 972 / ATCC 24843) (Fission yeast).